The chain runs to 709 residues: Leucine-rich repeat-containing protein 4B (709 aa).

The first 38 residues, 1 to 38, serve as a signal peptide directing secretion; that stretch reads MAQAHIQGSPCPLLPPGRMSWPQGALLLLWLFSPPLRA. The 39-residue stretch at 50–88 folds into the LRRNT domain; that stretch reads GGGSPPATSCPAACSCSNQASRVICTRRELAEVPASIPV. LRR repeat units lie at residues 89–110, 113–134, 137–158, 161–182, 185–207, 210–231, 232–253, 256–277, and 280–301; these read NTRY…TFKH, HLEI…AFNG, SLNT…AFEY, KLRE…AFNR, SLRR…AFEG, NLRY…TALV, RLEE…SFQG, SLRK…AFDD, and SLEE…LFTP. Residues 313–365 enclose the LRRCT domain; it reads NPWHCNCDVLWLSWWLKETVPSNTTCCARCHAPAGLKGRYIGELDQSHFTCYA. The Ig-like C2-type domain occupies 366–454; the sequence is PVIVEPPTDL…GNTTASATLN (89 aa). N-linked (GlcNAc...) asparagine glycans are attached at residues N376, N402, N424, N427, and N446. C387 and C438 are joined by a disulfide. The segment at 496-552 is disordered; the sequence is TQPGEEAQQPRGTEKEPPGPTTDGAWGGGRPDAAAPASASTTAPAPRSSRPTEKAFT. Residues 528-544 show a composition bias toward low complexity; sequence AAAPASASTTAPAPRSS. Residues 575 to 595 form a helical membrane-spanning segment; that stretch reads IIIGCFVAITFMAAVMLVAFY. The residue at position 689 (S689) is a Phosphoserine.

Interacts with PTPRF. Interacts with DLG4. N-glycosylated. O-glycosylated; contains sialic acid. In terms of tissue distribution, mainly expressed in the brain. Widespread distribution in various brain regions (at protein level). Detected both embryonically and postnatally with stronger expression in postnatal stages.

Its subcellular location is the membrane. The protein resides in the presynaptic cell membrane. Synaptic adhesion protein. Regulates the formation of excitatory synapses. The trans-synaptic adhesion between LRRC4B and PTPRF regulates the formation of excitatory synapses in a bidirectional manner. This chain is Leucine-rich repeat-containing protein 4B (Lrrc4b), found in Rattus norvegicus (Rat).